Here is a 400-residue protein sequence, read N- to C-terminus: Diphosphomevalonate decarboxylase (400 aa).

(R)-5-diphosphomevalonate-binding positions include 19–22 (YWGK), Arg-75, 154–159 (SGSACR), and Thr-210. The interval 381-400 (DGPRTLGPEEALLSPDGLPK) is disordered.

This sequence belongs to the diphosphomevalonate decarboxylase family.

The enzyme catalyses (R)-5-diphosphomevalonate + ATP = isopentenyl diphosphate + ADP + phosphate + CO2. The protein operates within isoprenoid biosynthesis; isopentenyl diphosphate biosynthesis via mevalonate pathway; isopentenyl diphosphate from (R)-mevalonate: step 3/3. In terms of biological role, diphosphomevalonate decarboxylase; part of the second module of ergosterol biosynthesis pathway that includes the middle steps of the pathway. The second module involves the formation of farnesyl diphosphate, which is also an important intermediate in the biosynthesis of ubiquinone, dolichol, heme and prenylated proteins. This module also plays a key role in the biosynthesis of triterpenes such as ganoderic acids (GA), a group of highly oxygenated lanostane-type triterpenoids which are well recognized as a main group of unique bioactive compounds in the medicinal mushroom Ganoderma lucidum. Activity by the mevalonate kinase first converts mevalonate into 5-phosphomevalonate. 5-phosphomevalonate is then further converted to 5-diphosphomevalonate by the phosphomevalonate kinase. The diphosphomevalonate decarboxylase MVD then produces isopentenyl diphosphate. The isopentenyl-diphosphate delta-isomerase then catalyzes the 1,3-allylic rearrangement of the homoallylic substrate isopentenyl (IPP) to its highly electrophilic allylic isomer, dimethylallyl diphosphate (DMAPP). Finally the farnesyl diphosphate synthase FPS catalyzes the sequential condensation of isopentenyl pyrophosphate with dimethylallyl pyrophosphate, and then with the resultant geranylpyrophosphate to the ultimate product farnesyl pyrophosphate. This is Diphosphomevalonate decarboxylase from Ganoderma lucidum (Ling zhi medicinal fungus).